The primary structure comprises 314 residues: MAERNYTVVTEFFLTAFTEHLQWRVPLFLIFLSFYLATMLGNTGMILLIRGDRRLHTPMYFFLSHLSLVDICYSSAIIPQMLAVLWEHGTTISQARCAAQFFLFTFFASIDCYLLAIMAYDRYTAVCQPLLYVTIITEKARWGLVTGAYVAGFFSAFVRTVTAFTLSFCGNNEINFIFCDLPPLLKLSCGDSYTQEVVIIVFALFVMPACILVILVSYLFIIVAILQIHSAGGRAKTFSTCASHLTAVALFFGTLIFMYLRDNTGQSSEGDRVVSVLYTVVTPMLNPLIYSLRNKEVKEATRKALSKSKPARRP.

Residues 1 to 25 (MAERNYTVVTEFFLTAFTEHLQWRV) are Extracellular-facing. Asparagine 5 carries an N-linked (GlcNAc...) asparagine glycan. A helical transmembrane segment spans residues 26–46 (PLFLIFLSFYLATMLGNTGMI). Topologically, residues 47-54 (LLIRGDRR) are cytoplasmic. The helical transmembrane segment at 55 to 75 (LHTPMYFFLSHLSLVDICYSS) threads the bilayer. At 76 to 99 (AIIPQMLAVLWEHGTTISQARCAA) the chain is on the extracellular side. Residues cysteine 97 and cysteine 189 are joined by a disulfide bond. Residues 100–120 (QFFLFTFFASIDCYLLAIMAY) traverse the membrane as a helical segment. Residues 121 to 139 (DRYTAVCQPLLYVTIITEK) are Cytoplasmic-facing. The chain crosses the membrane as a helical span at residues 140–160 (ARWGLVTGAYVAGFFSAFVRT). Residues 161–197 (VTAFTLSFCGNNEINFIFCDLPPLLKLSCGDSYTQEV) are Extracellular-facing. The chain crosses the membrane as a helical span at residues 198–217 (VIIVFALFVMPACILVILVS). Residues 218-237 (YLFIIVAILQIHSAGGRAKT) lie on the Cytoplasmic side of the membrane. The chain crosses the membrane as a helical span at residues 238-258 (FSTCASHLTAVALFFGTLIFM). Residues 259–271 (YLRDNTGQSSEGD) are Extracellular-facing. Residues 272–292 (RVVSVLYTVVTPMLNPLIYSL) traverse the membrane as a helical segment. Residues 293-314 (RNKEVKEATRKALSKSKPARRP) lie on the Cytoplasmic side of the membrane.

This sequence belongs to the G-protein coupled receptor 1 family.

It localises to the cell membrane. Odorant receptor. This chain is Olfactory receptor 9Q2 (OR9Q2), found in Homo sapiens (Human).